Reading from the N-terminus, the 172-residue chain is uncharacterized protein (172 aa).

The first 22 residues, 1-22, serve as a signal peptide directing secretion; the sequence is MKLFQLLLLVLTISSFIISNNG. Residues 23 to 140 lie on the Extracellular side of the membrane; the sequence is LVESHQGRMH…FSYENSSNET (118 aa). The segment at 27–69 is disordered; it reads HQGRMHRGSGERHHRAGGNQQQPQPPSEQQVESSYNSNDDGSS. Residues 29–42 are compositionally biased toward basic residues; sequence GRMHRGSGERHHRA. A compositionally biased stretch (low complexity) spans 53–69; the sequence is SEQQVESSYNSNDDGSS. N-linked (GlcNAc...) asparagine glycans are attached at residues Asn-135 and Asn-138. The helical transmembrane segment at 141–161 threads the bilayer; sequence IVIYINPVTLVFTLVLLLTFI. Residues 162-172 are Cytoplasmic-facing; sequence VLTITQSLRKY.

Its subcellular location is the membrane. This is an uncharacterized protein from Dictyostelium discoideum (Social amoeba).